The sequence spans 95 residues: Phospholipase A2 inhibitor gammaCdcPLI (95 aa).

Intrachain disulfides connect Cys2–Cys26, Cys5–Cys12, Cys19–Cys30, and Cys61–Cys77.

In terms of assembly, forms dimers or higher order oligomers in a temperature-dependent manner in vitro. As to expression, expressed by the liver.

It is found in the secreted. In terms of biological role, inhibits the enzymatic activity of basic and acidic PLA2 from B.jararacussu and B.pauloensis, respectively, in a dose-dependent manner. Also inhibits myotoxicity and cytotoxicity of BnSp-7 of B.pauloensis. The protein is Phospholipase A2 inhibitor gammaCdcPLI of Crotalus durissus collilineatus (Brazilian rattlesnake).